Here is a 740-residue protein sequence, read N- to C-terminus: ABC transporter G family member 1 (740 aa).

In terms of domain architecture, ABC transporter spans 82–334; it reads LDFRNLFPRR…FTEFGSPIPE (253 aa). Residue 127-134 participates in ATP binding; it reads GASGSGKS. The ABC transmembrane type-2 domain maps to 434–644; the sequence is IEIKTLSKRS…PYEAVLQNEF (211 aa). The next 6 helical transmembrane spans lie at 453–473, 488–508, 529–549, 563–585, 594–614, and 713–733; these read LFGIRIASVVITGFILATVFW, FFAFAMSTMFYTCADALPVFL, VLSHAIVSFPSLIFLSVAFAA, GLLFYCLIILASFWSGSSFVTFL, LGYTIVVAILAYFLLFSGFFI, and LFITVAFGFFFRILFYFTLLL.

It belongs to the ABC transporter superfamily. ABCG family. Eye pigment precursor importer (TC 3.A.1.204) subfamily.

It is found in the membrane. This chain is ABC transporter G family member 1 (ABCG1), found in Arabidopsis thaliana (Mouse-ear cress).